Here is a 468-residue protein sequence, read N- to C-terminus: UDP-glucosyl transferase 74CD1 (468 aa).

Residue glycine 20 coordinates UDP-alpha-D-glucose. Catalysis depends on histidine 21, which acts as the Proton acceptor. Aspartate 114 acts as the Charge relay in catalysis. UDP-alpha-D-glucose-binding residues include serine 292, tryptophan 344, glutamine 347, histidine 362, tryptophan 365, asparagine 366, serine 367, glutamate 370, aspartate 386, and glutamine 387.

It belongs to the UDP-glycosyltransferase family. As to expression, mainly expressed in flowers, flower buds and young leaves, and, to a lesser extent, in old leaves, stems and roots.

Its pathway is secondary metabolite biosynthesis; terpenoid biosynthesis. Component of the oleanane-type triterpene saponins (e.g. saponarioside A and saponarioside B) biosynthetic pathway, leading to the production of natural products with detergent properties used as traditional sources of soap. A glycosyltransferase that, together with SDR1, mediates the conversion of QA-tri to QA-triF; UGT74CD1 may transfer 4-keto-6-deoxy-glucose to QA-tri, which is in turn reduced to D-fucose by SDR1, thus leading to QA-triF formation via the initiation of the C-28 sugar chain. The chain is UDP-glucosyl transferase 74CD1 from Saponaria officinalis (Common soapwort).